Consider the following 460-residue polypeptide: Bifunctional protein GlmU (460 aa).

Residues 1-232 (MALNVVILAA…AIEVEGANNR (232 aa)) form a pyrophosphorylase region. UDP-N-acetyl-alpha-D-glucosamine-binding positions include 8 to 11 (LAAG), Lys-22, Gln-73, 78 to 79 (GT), 100 to 102 (YGD), Gly-137, Glu-157, Asn-172, and Asn-230. Residue Asp-102 participates in Mg(2+) binding. Mg(2+) is bound at residue Asn-230. The interval 233–253 (VQLAQLERAYQAREAEKLMLA) is linker. The N-acetyltransferase stretch occupies residues 254–460 (GANLRDPSRI…GWQRPVKIKK (207 aa)). 2 residues coordinate UDP-N-acetyl-alpha-D-glucosamine: Arg-336 and Lys-354. The active-site Proton acceptor is His-366. 2 residues coordinate UDP-N-acetyl-alpha-D-glucosamine: Tyr-369 and Asn-380. Residues Ala-383, 389-390 (NY), Ser-408, Ala-426, and Arg-443 contribute to the acetyl-CoA site.

It in the N-terminal section; belongs to the N-acetylglucosamine-1-phosphate uridyltransferase family. In the C-terminal section; belongs to the transferase hexapeptide repeat family. In terms of assembly, homotrimer. The cofactor is Mg(2+).

It is found in the cytoplasm. The catalysed reaction is alpha-D-glucosamine 1-phosphate + acetyl-CoA = N-acetyl-alpha-D-glucosamine 1-phosphate + CoA + H(+). The enzyme catalyses N-acetyl-alpha-D-glucosamine 1-phosphate + UTP + H(+) = UDP-N-acetyl-alpha-D-glucosamine + diphosphate. It functions in the pathway nucleotide-sugar biosynthesis; UDP-N-acetyl-alpha-D-glucosamine biosynthesis; N-acetyl-alpha-D-glucosamine 1-phosphate from alpha-D-glucosamine 6-phosphate (route II): step 2/2. It participates in nucleotide-sugar biosynthesis; UDP-N-acetyl-alpha-D-glucosamine biosynthesis; UDP-N-acetyl-alpha-D-glucosamine from N-acetyl-alpha-D-glucosamine 1-phosphate: step 1/1. Its pathway is bacterial outer membrane biogenesis; LPS lipid A biosynthesis. Functionally, catalyzes the last two sequential reactions in the de novo biosynthetic pathway for UDP-N-acetylglucosamine (UDP-GlcNAc). The C-terminal domain catalyzes the transfer of acetyl group from acetyl coenzyme A to glucosamine-1-phosphate (GlcN-1-P) to produce N-acetylglucosamine-1-phosphate (GlcNAc-1-P), which is converted into UDP-GlcNAc by the transfer of uridine 5-monophosphate (from uridine 5-triphosphate), a reaction catalyzed by the N-terminal domain. The sequence is that of Bifunctional protein GlmU from Shewanella baltica (strain OS195).